Here is a 172-residue protein sequence, read N- to C-terminus: Ribosome maturation factor RimM (172 aa).

One can recognise a PRC barrel domain in the interval 96-168 (DGEFYYHEII…RIEVELMEGL (73 aa)).

Belongs to the RimM family. As to quaternary structure, binds ribosomal protein uS19.

The protein resides in the cytoplasm. Functionally, an accessory protein needed during the final step in the assembly of 30S ribosomal subunit, possibly for assembly of the head region. Essential for efficient processing of 16S rRNA. May be needed both before and after RbfA during the maturation of 16S rRNA. It has affinity for free ribosomal 30S subunits but not for 70S ribosomes. This chain is Ribosome maturation factor RimM, found in Streptococcus thermophilus (strain ATCC BAA-491 / LMD-9).